We begin with the raw amino-acid sequence, 33 residues long: Mu-theraphotoxin-Tp1a (33 aa).

Disulfide bonds link Cys2–Cys17, Cys9–Cys22, and Cys16–Cys29. Ile33 is modified (isoleucine amide).

It belongs to the neurotoxin 10 (Hwtx-1) family. 55 (ProTx-III) subfamily. In terms of tissue distribution, expressed by the venom gland.

It localises to the secreted. In terms of biological role, inhibits voltage-gated sodium channels without significantly altering the voltage dependence of activation or inactivation. Preferentially inhibits human Nav1.7/SCN9A (IC(50)=2.1 nM) &gt; human Nav1.6/SCN8A &gt; human Nav1.2/SCN2A &gt; human Nav1.1/SCN1A &gt; human Nav1.3/SCN3A channels. Exhibits analgesic properties by reversing spontaneous pain induced in mice by intraplantar injection with OD1 (AC P84646), a scorpion toxin that potentiates human Nav1.7/SCN9A. The protein is Mu-theraphotoxin-Tp1a of Thrixopelma pruriens (Peruvian green velvet tarantula).